The chain runs to 310 residues: MGKRRCVPPLEPKLAAGCCGVKKPKLSGSGTHSHGNQSTTVPGSSSGPLQNHQHVDSSSGRENVSDLTLGPGNSPITRMNPASGALSPLPRPNGTANTTKNLVVTAEMCCYCFDVLYCHLYGFPQPRLPRFTNDPYPLFVTWKTGRDKRLRGCIGTFSAMNLHSGLREYTLTSALKDSRFPPLTREELPKLFCSVSLLTNFEDASDYLDWEVGVHGIRIEFINEKGVKRTATYLPEVAKEQDWDQIQTIDSLLRKGGFKAPITSEFRKTIKLTRYRSEKVTISYAEYIASRQHCFQNGTLHAPPLYNHYS.

Residues L26 to T95 are disordered. The span at G28 to D66 shows a compositional bias: polar residues. S74 carries the post-translational modification Phosphoserine. The region spanning N97–R291 is the AMMECR1 domain.

The chain is AMMECR1-like protein (AMMECR1L) from Homo sapiens (Human).